We begin with the raw amino-acid sequence, 302 residues long: Acetaldehyde dehydrogenase (302 aa).

NAD(+) is bound at residue serine 12–isoleucine 15. The active-site Acyl-thioester intermediate is cysteine 127. Residues serine 158–asparagine 166 and asparagine 276 contribute to the NAD(+) site.

The protein belongs to the acetaldehyde dehydrogenase family.

The enzyme catalyses acetaldehyde + NAD(+) + CoA = acetyl-CoA + NADH + H(+). The protein is Acetaldehyde dehydrogenase (nahO) of Geobacillus genomosp. 3.